Reading from the N-terminus, the 202-residue chain is MSSPTTKFSNAASSAGGPRVTPAAASILDPRTGRPVGAGDPYFLEVNHELSDKGFFVAATDDLITWARTGSLMWMTFGLACCAVEMMQVSMPRYDVERFGFAPRASPRQSDVMIVAGTLTNKMAPALRKVYDQMPEPRYVISMGSCANGGGYYHYSYSVVRGCDRIVPIDVYVPGCPPTAEALLYGILLLQKKIRRTGTIER.

Positions 1–13 are enriched in polar residues; it reads MSSPTTKFSNAAS. A disordered region spans residues 1–32; it reads MSSPTTKFSNAASSAGGPRVTPAAASILDPRT. [4Fe-4S] cluster-binding residues include Cys81, Cys82, Cys146, and Cys176.

The protein belongs to the complex I 20 kDa subunit family. In terms of assembly, NDH-1 is composed of 14 different subunits. Subunits NuoB, C, D, E, F, and G constitute the peripheral sector of the complex. It depends on [4Fe-4S] cluster as a cofactor.

Its subcellular location is the cell inner membrane. It carries out the reaction a quinone + NADH + 5 H(+)(in) = a quinol + NAD(+) + 4 H(+)(out). NDH-1 shuttles electrons from NADH, via FMN and iron-sulfur (Fe-S) centers, to quinones in the respiratory chain. The immediate electron acceptor for the enzyme in this species is believed to be ubiquinone. Couples the redox reaction to proton translocation (for every two electrons transferred, four hydrogen ions are translocated across the cytoplasmic membrane), and thus conserves the redox energy in a proton gradient. This is NADH-quinone oxidoreductase subunit B from Nitrobacter hamburgensis (strain DSM 10229 / NCIMB 13809 / X14).